A 98-amino-acid chain; its full sequence is Integration host factor subunit alpha (98 aa).

The segment at 50 to 71 (GNFDLRDKNQRPGRNPKTGEDI) is disordered.

This sequence belongs to the bacterial histone-like protein family. As to quaternary structure, heterodimer of an alpha and a beta chain.

Its function is as follows. This protein is one of the two subunits of integration host factor, a specific DNA-binding protein that functions in genetic recombination as well as in transcriptional and translational control. The chain is Integration host factor subunit alpha from Proteus mirabilis (strain HI4320).